We begin with the raw amino-acid sequence, 313 residues long: Probable myosin light chain kinase DDB_G0292624 (313 aa).

Residues 6–264 (YELHKEIGKG…AKQALEHPWI (259 aa)) enclose the Protein kinase domain. Residues 12 to 20 (IGKGAFSVV) and Lys-35 each bind ATP. Asp-125 acts as the Proton acceptor in catalysis.

This sequence belongs to the protein kinase superfamily. CAMK Ser/Thr protein kinase family. CaMK subfamily.

The enzyme catalyses L-seryl-[myosin light chain] + ATP = O-phospho-L-seryl-[myosin light chain] + ADP + H(+). It carries out the reaction L-threonyl-[myosin light chain] + ATP = O-phospho-L-threonyl-[myosin light chain] + ADP + H(+). Does not have a calmodulin-binding domain. May phosphorylate a specific serine in the N-terminus of a myosin light chain. In Dictyostelium discoideum (Social amoeba), this protein is Probable myosin light chain kinase DDB_G0292624.